We begin with the raw amino-acid sequence, 231 residues long: Large ribosomal subunit protein uL1 (231 aa).

This sequence belongs to the universal ribosomal protein uL1 family. Part of the 50S ribosomal subunit.

Binds directly to 23S rRNA. The L1 stalk is quite mobile in the ribosome, and is involved in E site tRNA release. Functionally, protein L1 is also a translational repressor protein, it controls the translation of the L11 operon by binding to its mRNA. The sequence is that of Large ribosomal subunit protein uL1 from Staphylococcus epidermidis (strain ATCC 35984 / DSM 28319 / BCRC 17069 / CCUG 31568 / BM 3577 / RP62A).